We begin with the raw amino-acid sequence, 479 residues long: MNVTTPEVAFREYQTNCLASYISADPDITPSNLILQGYSGTGKTYTLKKYFNANPNLHAVWLEPVELVSWKPLLQAIARTVQYKLKTLYPNIPTTDYDPLQVEEPFLLVKTLHNIFVQYESLQEKTCLFLILDGFDSLQDLDAALFNKYIKLNELLPKDSKINIKFIYTMLETSFLQRYSTHCIPTVMFPRYNVDEVSTILVMSRCGELMEDSCLRKRIIEEQITDCTDDQFQNVAANFIHLIVQAFHSYTGNDIFALNDLIDFKWPKYVSRITKENIFEPLALYKSAIKLFLSTDDNLSENGQGESAITTNRDDLENSQTYDLSIISKYLLIASYICSYLEPRYDASIFSRKTRIIQGRAAYGRRKKKEVNPRYLQPSLFAIERLLAIFQAIFPIQGKAESGSLSALREESLMKANIEVFQNLSELHTLKLIATTMNKNIDYLSPKVRWKVNVPWEIIKEISESVHFNISDYFSDIHE.

37–44 (GYSGTGKT) lines the ATP pocket.

Belongs to the ORC5 family. As to quaternary structure, component of the origin recognition complex (ORC) composed of at least ORC1, ORC2, ORC3, ORC4, ORC5 and ORC6. Interacts with ORC6. Component of a cullin-RING ligase (CRL)-like complex composed of at least the cullin RTT101, a linker protein MMS1, and the potential substrate receptor ORC5. Interacts with RTT101 and MMS1.

It localises to the nucleus. Its function is as follows. Component of the origin recognition complex (ORC) that binds origins of replication. It has a role in both chromosomal replication and mating type transcriptional silencing. Binds to the ARS consensus sequence (ACS) of origins of replication. This subunit is a candidate for the mediation of ATP-dependent binding of ORC to origins. May also be a substrate targeting component of a cullin-RING-based E3 ubiquitin-protein ligase complex RTT101(MMS1-ORC5). The sequence is that of Origin recognition complex subunit 5 (ORC5) from Saccharomyces cerevisiae (strain ATCC 204508 / S288c) (Baker's yeast).